We begin with the raw amino-acid sequence, 342 residues long: Ribosomal RNA small subunit methyltransferase C (342 aa).

The protein belongs to the methyltransferase superfamily. RsmC family. As to quaternary structure, monomer.

Its subcellular location is the cytoplasm. The catalysed reaction is guanosine(1207) in 16S rRNA + S-adenosyl-L-methionine = N(2)-methylguanosine(1207) in 16S rRNA + S-adenosyl-L-homocysteine + H(+). In terms of biological role, specifically methylates the guanine in position 1207 of 16S rRNA in the 30S particle. The protein is Ribosomal RNA small subunit methyltransferase C of Erwinia tasmaniensis (strain DSM 17950 / CFBP 7177 / CIP 109463 / NCPPB 4357 / Et1/99).